We begin with the raw amino-acid sequence, 184 residues long: Transcription termination/antitermination protein NusG (184 aa).

Residues E133–V163 enclose the KOW domain.

It belongs to the NusG family.

Its function is as follows. Participates in transcription elongation, termination and antitermination. This is Transcription termination/antitermination protein NusG from Thermus thermophilus (strain ATCC 27634 / DSM 579 / HB8).